A 193-amino-acid chain; its full sequence is NAD(P)H-quinone oxidoreductase subunit I (193 aa).

2 consecutive 4Fe-4S ferredoxin-type domains span residues 55-84 (GRIH…VDWE) and 95-124 (KHYS…VTEE). Residues Cys64, Cys67, Cys70, Cys74, Cys104, Cys107, Cys110, and Cys114 each coordinate [4Fe-4S] cluster.

It belongs to the complex I 23 kDa subunit family. As to quaternary structure, NDH-1 is composed of at least 11 different subunits. Requires [4Fe-4S] cluster as cofactor.

It is found in the cellular thylakoid membrane. It carries out the reaction a plastoquinone + NADH + (n+1) H(+)(in) = a plastoquinol + NAD(+) + n H(+)(out). It catalyses the reaction a plastoquinone + NADPH + (n+1) H(+)(in) = a plastoquinol + NADP(+) + n H(+)(out). In terms of biological role, NDH-1 shuttles electrons from an unknown electron donor, via FMN and iron-sulfur (Fe-S) centers, to quinones in the respiratory and/or the photosynthetic chain. The immediate electron acceptor for the enzyme in this species is believed to be plastoquinone. Couples the redox reaction to proton translocation, and thus conserves the redox energy in a proton gradient. The protein is NAD(P)H-quinone oxidoreductase subunit I of Cyanothece sp. (strain PCC 7425 / ATCC 29141).